We begin with the raw amino-acid sequence, 202 residues long: Small ribosomal subunit protein uS4c (202 aa).

Residues 90-153 (MRLDNVIFRL…KSETIISKNI (64 aa)) form the S4 RNA-binding domain.

The protein belongs to the universal ribosomal protein uS4 family. Part of the 30S ribosomal subunit. Contacts protein S5. The interaction surface between S4 and S5 is involved in control of translational fidelity.

The protein localises to the plastid. The protein resides in the chloroplast. One of the primary rRNA binding proteins, it binds directly to 16S rRNA where it nucleates assembly of the body of the 30S subunit. In terms of biological role, with S5 and S12 plays an important role in translational accuracy. The protein is Small ribosomal subunit protein uS4c (rps4) of Hylocomium splendens (Glittering wood-moss).